The following is a 219-amino-acid chain: MQFDWSAIWPAIPLLIEGAKMTLWISVLGLAGGLVIGLLAGFARTFGGWIANHVALVFIEVIRGTPIVVQVMFIYFALPMAFNDLRIDPFTAAVVTIMINSGAYIAEITRGAVLSIHKGFREAGLALGLSRWETIRYVILPLALRRMLPPLGNQWIISIKDTSLFIVIGVAELTRQGQEIIAGNFRALEIWSAVAVFYLIITLVLSFILRRLERRMKIL.

Topologically, residues methionine 1–threonine 22 are periplasmic. Residues alanine 19–leucine 209 enclose the ABC transmembrane type-1 domain. A helical membrane pass occupies residues leucine 23–alanine 43. At arginine 44 to histidine 53 the chain is on the cytoplasmic side. The chain crosses the membrane as a helical span at residues valine 54–isoleucine 74. Residues tyrosine 75–aspartate 88 lie on the Periplasmic side of the membrane. Residues proline 89–threonine 109 traverse the membrane as a helical segment. Over arginine 110–proline 150 the chain is Cytoplasmic. The chain crosses the membrane as a helical span at residues leucine 151–alanine 171. The Periplasmic portion of the chain corresponds to glutamate 172 to alanine 187. The helical transmembrane segment at leucine 188 to isoleucine 208 threads the bilayer. Residues leucine 209–leucine 219 lie on the Cytoplasmic side of the membrane.

It belongs to the binding-protein-dependent transport system permease family. HisMQ subfamily.

Its subcellular location is the cell inner membrane. In terms of biological role, part of the binding-protein-dependent transport system for glutamine; probably responsible for the translocation of the substrate across the membrane. This chain is Glutamine transport system permease protein GlnP (glnP), found in Escherichia coli O6:H1 (strain CFT073 / ATCC 700928 / UPEC).